Consider the following 122-residue polypeptide: Large ribosomal subunit protein uL14 (122 aa).

Belongs to the universal ribosomal protein uL14 family. Part of the 50S ribosomal subunit. Forms a cluster with proteins L3 and L19. In the 70S ribosome, L14 and L19 interact and together make contacts with the 16S rRNA in bridges B5 and B8.

Binds to 23S rRNA. Forms part of two intersubunit bridges in the 70S ribosome. The protein is Large ribosomal subunit protein uL14 of Alteromonas mediterranea (strain DSM 17117 / CIP 110805 / LMG 28347 / Deep ecotype).